Here is a 394-residue protein sequence, read N- to C-terminus: Phosphoglycerate kinase (394 aa).

Residues 21–23 (DFN), Arg36, 59–62 (HLGR), Arg118, and Arg151 each bind substrate. Ser183 bears the Phosphoserine mark. ATP is bound by residues Lys201 and Gly292. Thr299 bears the Phosphothreonine mark. Residues Glu323 and 350-353 (GGDS) each bind ATP.

This sequence belongs to the phosphoglycerate kinase family. Monomer.

Its subcellular location is the cytoplasm. The catalysed reaction is (2R)-3-phosphoglycerate + ATP = (2R)-3-phospho-glyceroyl phosphate + ADP. It participates in carbohydrate degradation; glycolysis; pyruvate from D-glyceraldehyde 3-phosphate: step 2/5. In Bacillus thuringiensis subsp. konkukian (strain 97-27), this protein is Phosphoglycerate kinase.